Consider the following 242-residue polypeptide: MAGHSKWANIKHKKAAADAKKGKVWTRLIKEIQVAARMGGGDIDSNPRLRLAVDKAYDANMPKDNINRAIQRGVGGVDGANYEEIRYEGYGIGGAAIIVDTMTDNRTRTVAEVRHAFSKFGGNMGTDGSVSFMFDHVGQFLFAPGTPEDKLMDAALEAGADDVVTNEDGSIEVICPPNDFSKVKAALETAGFKAELAEVTMKPQTEVEFAGDDAVKMQKLLDALENLDDVQEVYTNAAIADE.

The protein belongs to the TACO1 family.

The protein localises to the cytoplasm. This is Probable transcriptional regulatory protein Bphy_2064 from Paraburkholderia phymatum (strain DSM 17167 / CIP 108236 / LMG 21445 / STM815) (Burkholderia phymatum).